We begin with the raw amino-acid sequence, 379 residues long: Guanine nucleotide-binding protein G(s) subunit alpha (379 aa).

The interval 1–29 (MGCFGSAGAKGDAEENKKRKEANKNINKQ) is disordered. G2 carries the N-palmitoyl glycine lipid modification. Residue C3 is the site of S-palmitoyl cysteine attachment. Residues 39–379 (ATHRLLLLGA…RMHLRQYELL (341 aa)) enclose the G-alpha domain. Positions 42–55 (RLLLLGAGESGKST) are G1 motif. GTP contacts are provided by residues 47–54 (GAGESGKS), 183–189 (LRCRVLT), 208–212 (DVGGQ), 277–280 (NKQD), and A351. 2 residues coordinate Mg(2+): S54 and T189. The segment at 181–189 (DILRCRVLT) is G2 motif. Residues 204–213 (FHMFDVGGQR) form a G3 motif region. Positions 273 to 280 (ILFLNKQD) are G4 motif. The tract at residues 349 to 354 (TCAVDT) is G5 motif.

The protein belongs to the G-alpha family. G(s) subfamily. As to quaternary structure, g proteins are composed of 3 units; alpha, beta and gamma. The alpha chain contains the guanine nucleotide binding site.

Guanine nucleotide-binding proteins (G proteins) are involved as modulators or transducers in various transmembrane signaling systems. The G(s) protein is involved in hormonal regulation of adenylate cyclase: it activates the cyclase in response to beta-adrenergic stimuli. This chain is Guanine nucleotide-binding protein G(s) subunit alpha, found in Homarus americanus (American lobster).